Here is a 121-residue protein sequence, read N- to C-terminus: C-type natriuretic peptide 4 (121 aa).

The N-terminal stretch at Met1 to Ala22 is a signal peptide. The propeptide occupies Gln23–Lys96. The tract at residues Leu80 to Lys109 is disordered. Cys105 and Cys121 are disulfide-bonded.

The protein belongs to the natriuretic peptide family. As to expression, brain, spinal cord, spleen, heart and fin, and to a lower extent in gill and ovary.

It is found in the secreted. Its function is as follows. Exhibits natriuretic and vasodepressant activity. Has cGMP-stimulating activity. May help to regulate body fluid homeostasis in a variety of aquatic environments. The protein is C-type natriuretic peptide 4 of Oryzias latipes (Japanese rice fish).